The sequence spans 371 residues: Ferrochelatase (371 aa).

His218 and Glu299 together coordinate Fe cation.

Belongs to the ferrochelatase family.

The protein localises to the cytoplasm. The catalysed reaction is heme b + 2 H(+) = protoporphyrin IX + Fe(2+). It functions in the pathway porphyrin-containing compound metabolism; protoheme biosynthesis; protoheme from protoporphyrin-IX: step 1/1. Catalyzes the ferrous insertion into protoporphyrin IX. The polypeptide is Ferrochelatase (Ralstonia pickettii (strain 12J)).